Reading from the N-terminus, the 186-residue chain is CoB--CoM heterodisulfide reductase iron-sulfur subunit C 2 (186 aa).

4Fe-4S ferredoxin-type domains are found at residues 26 to 56 and 67 to 99; these read GEDI…AYRT and LDDV…TEII. The [4Fe-4S] cluster site is built by C36, C39, C42, C46, C79, C82, C85, and C89.

Belongs to the HdrC family. In terms of assembly, the heterodisulfide reductase is composed of three subunits; HdrA, HdrB and HdrC. [4Fe-4S] cluster serves as cofactor.

The protein operates within cofactor metabolism; coenzyme M-coenzyme B heterodisulfide reduction; coenzyme B and coenzyme M from coenzyme M-coenzyme B heterodisulfide: step 1/1. Its function is as follows. Part of a complex that catalyzes the reversible reduction of CoM-S-S-CoB to the thiol-coenzymes H-S-CoM (coenzyme M) and H-S-CoB (coenzyme B). The protein is CoB--CoM heterodisulfide reductase iron-sulfur subunit C 2 (hdrC2) of Methanocaldococcus jannaschii (strain ATCC 43067 / DSM 2661 / JAL-1 / JCM 10045 / NBRC 100440) (Methanococcus jannaschii).